A 763-amino-acid polypeptide reads, in one-letter code: Elongation factor G, mitochondrial (763 aa).

A mitochondrion-targeting transit peptide spans 1 to 52 (MFMRLKVLEMNSIRRQTLLRQFTNVYNVVSRSARLCSQAIPKRLFYSTGSRA). The 288-residue stretch at 60–347 (SRLRNIGISA…AVCDYLPNPS (288 aa)) folds into the tr-type G domain. GTP contacts are provided by residues 69-76 (AHIDSGKT), 145-149 (DTPGH), and 199-202 (NKMD).

Belongs to the TRAFAC class translation factor GTPase superfamily. Classic translation factor GTPase family. EF-G/EF-2 subfamily.

It is found in the mitochondrion. The protein operates within protein biosynthesis; polypeptide chain elongation. Functionally, mitochondrial GTPase that catalyzes the GTP-dependent ribosomal translocation step during translation elongation. During this step, the ribosome changes from the pre-translocational (PRE) to the post-translocational (POST) state as the newly formed A-site-bound peptidyl-tRNA and P-site-bound deacylated tRNA move to the P and E sites, respectively. Catalyzes the coordinated movement of the two tRNA molecules, the mRNA and conformational changes in the ribosome. This chain is Elongation factor G, mitochondrial (mef1), found in Schizosaccharomyces japonicus (strain yFS275 / FY16936) (Fission yeast).